The sequence spans 346 residues: uncharacterized protein (346 aa).

It belongs to the PhyH family.

The protein localises to the cytoplasm. This is an uncharacterized protein from Saccharomyces cerevisiae (strain ATCC 204508 / S288c) (Baker's yeast).